Here is a 595-residue protein sequence, read N- to C-terminus: SVP1-like protein 2 (595 aa).

The interval 1–28 is disordered; sequence MVLAHSINTNPNTNTNTNNTSTTSSTTT. The WD 1 repeat unit spans residues 30 to 68; sequence PNDSKILCINFNQDQGCFAISHEQGFLVYNTDPIELRVK. Composition is skewed to low complexity over residues 76–112 and 270–339; these read HTTSSRSNHSNGSNSNNNHRNNSTGSNGSVSSSGSNN and LSPT…TTTT. Disordered stretches follow at residues 76–132 and 264–342; these read HTTS…GSGS and FSKR…TSAK. WD repeat units lie at residues 389–429 and 434–473; these read AHKS…LLYE and IDRAIITSMKFSHDDSKLAVLSDKHTLHVYNIDETQYPND. The interval 467–490 is disordered; it reads ETQYPNDGGSGGTKDGGGGGRGSK. Gly residues predominate over residues 474-488; the sequence is GGSGGTKDGGGGGRG.

The protein belongs to the WD repeat PROPPIN family.

The protein resides in the vacuole membrane. Its subcellular location is the cytoplasmic vesicle membrane. In terms of biological role, involved in mitochondrial or peroxisomal functions and amino acid signaling pathways. This Candida albicans (strain SC5314 / ATCC MYA-2876) (Yeast) protein is SVP1-like protein 2 (HSV2).